Reading from the N-terminus, the 314-residue chain is Vacuolar membrane protein SCRG_03194 (314 aa).

The segment at lysine 32–alanine 60 is disordered. A helical membrane pass occupies residues valine 93–leucine 113. 3 positions are modified to phosphoserine: serine 148, serine 254, and serine 274. The interval glutamate 240–asparagine 309 is disordered. Positions serine 254–histidine 269 are enriched in basic and acidic residues.

Belongs to the PRM5 family.

Its subcellular location is the vacuole membrane. The protein is Vacuolar membrane protein SCRG_03194 of Saccharomyces cerevisiae (strain RM11-1a) (Baker's yeast).